We begin with the raw amino-acid sequence, 186 residues long: MKAGAVESGEISKGAPPRKGLIRGLSIMDFILRIVAAIATLGSALGMGTTRQTLPFSTQFVKFRAVFSDVPTFVFFVTSNSIVCGYLVLSLVLSFFHIVRSAAVKSRVLQVFLDTVMYGLLTTGASAATAIVYEAHYGNSNTNWFPFCRQYNHFCKQISGSLIGSFIAVVLFIILILMSAISISKH.

Topologically, residues 1–26 (MKAGAVESGEISKGAPPRKGLIRGLS) are cytoplasmic. The chain crosses the membrane as a helical span at residues 27–47 (IMDFILRIVAAIATLGSALGM). Residues 48-72 (GTTRQTLPFSTQFVKFRAVFSDVPT) are Extracellular-facing. A helical transmembrane segment spans residues 73–93 (FVFFVTSNSIVCGYLVLSLVL). Topologically, residues 94 to 110 (SFFHIVRSAAVKSRVLQ) are cytoplasmic. A helical membrane pass occupies residues 111–131 (VFLDTVMYGLLTTGASAATAI). Over 132–162 (VYEAHYGNSNTNWFPFCRQYNHFCKQISGSL) the chain is Extracellular. A helical membrane pass occupies residues 163-183 (IGSFIAVVLFIILILMSAISI). Over 184-186 (SKH) the chain is Cytoplasmic.

It belongs to the Casparian strip membrane proteins (CASP) family. Homodimer and heterodimers.

It localises to the cell membrane. In terms of biological role, regulates membrane-cell wall junctions and localized cell wall deposition. Required for establishment of the Casparian strip membrane domain (CSD) and the subsequent formation of Casparian strips, a cell wall modification of the root endodermis that determines an apoplastic barrier between the intraorganismal apoplasm and the extraorganismal apoplasm and prevents lateral diffusion. The chain is CASP-like protein 6 from Glycine max (Soybean).